An 863-amino-acid chain; its full sequence is Chromatin assembly factor 1 subunit A (863 aa).

4 disordered regions span residues 1-353, 423-466, 513-579, and 749-863; these read MVVV…EEKD, LNGL…PDRS, DSDE…RQRM, and VTRD…PATA. The segment covering 42–54 has biased composition (basic and acidic residues); sequence LNPEPKECNEPKR. Residue Thr111 is modified to Phosphothreonine. Residue Ser118 is modified to Phosphoserine. Residues 144-154 show a composition bias toward low complexity; the sequence is SEGTTEPTIPL. 2 stretches are compositionally biased toward acidic residues: residues 155–168 and 177–196; these read TEEETEKDEAEDVD and QDSDTEEEEEEEEEEEEQQQ. Residues 205–237 are compositionally biased toward low complexity; it reads ESVLSTGSTSSASVIASSPEPSKSAPTTPASTS. Composition is skewed to basic and acidic residues over residues 254 to 353 and 457 to 466; these read QEQE…EEKD and QKADDGPDRS. 2 stretches are compositionally biased toward acidic residues: residues 513-524 and 532-547; these read DSDEEWEEEEPG and GDDDDEAGEDDDDDDG. Positions 569–579 are enriched in basic and acidic residues; sequence DPEKQKVRQRM. Residues 760-771 are compositionally biased toward low complexity; that stretch reads NSPTTNSSTTPS. Residues 806–815 show a composition bias toward acidic residues; it reads DTEDDEDDDC. Residues 821–835 are compositionally biased toward polar residues; the sequence is QSGSSEQDINTSLPQ. Positions 850 to 863 are enriched in low complexity; it reads TAALALPCPTPATA.

Belongs to the CHAF1A family.

The protein resides in the nucleus. Acts as a component of the histone chaperone complex chromatin assembly factor 1 (CAF-1), which assembles histone octamers onto DNA during replication and repair. CAF-1 performs the first step of the nucleosome assembly process, bringing newly synthesized histones H3 and H4 to replicating DNA; histones H2A/H2B can bind to this chromatin precursor subsequent to DNA replication to complete the histone octamer. In Danio rerio (Zebrafish), this protein is Chromatin assembly factor 1 subunit A (chaf1a).